Here is a 418-residue protein sequence, read N- to C-terminus: Light-independent protochlorophyllide reductase subunit N (418 aa).

Residues cysteine 17, cysteine 42, and cysteine 103 each coordinate [4Fe-4S] cluster.

The protein belongs to the BchN/ChlN family. In terms of assembly, protochlorophyllide reductase is composed of three subunits; ChlL, ChlN and ChlB. Forms a heterotetramer of two ChlB and two ChlN subunits. [4Fe-4S] cluster serves as cofactor.

It catalyses the reaction chlorophyllide a + oxidized 2[4Fe-4S]-[ferredoxin] + 2 ADP + 2 phosphate = protochlorophyllide a + reduced 2[4Fe-4S]-[ferredoxin] + 2 ATP + 2 H2O. It participates in porphyrin-containing compound metabolism; chlorophyll biosynthesis (light-independent). In terms of biological role, component of the dark-operative protochlorophyllide reductase (DPOR) that uses Mg-ATP and reduced ferredoxin to reduce ring D of protochlorophyllide (Pchlide) to form chlorophyllide a (Chlide). This reaction is light-independent. The NB-protein (ChlN-ChlB) is the catalytic component of the complex. The polypeptide is Light-independent protochlorophyllide reductase subunit N (Prochlorococcus marinus (strain MIT 9215)).